The chain runs to 1448 residues: Sister chromatid cohesion protein PDS5 homolog B-A (1448 aa).

The HEAT repeat unit spans residues leucine 383–tyrosine 419. Residues alanine 1141–valine 1155 show a composition bias toward polar residues. Residues alanine 1141–arginine 1448 are disordered. Positions serine 1156 to glycine 1168 are enriched in low complexity. Residues methionine 1177 to aspartate 1186 are compositionally biased toward acidic residues. Composition is skewed to basic and acidic residues over residues lysine 1196–proline 1214, glutamate 1233–serine 1243, and tryptophan 1264–leucine 1273. Residues lysine 1285–lysine 1294 show a composition bias toward basic residues. Residues lysine 1286–methionine 1298 constitute a DNA-binding region (a.T hook 1). Residues proline 1324–asparagine 1341 show a composition bias toward acidic residues. Over residues arginine 1346–proline 1356 the composition is skewed to basic residues. DNA-binding regions (a.T hook) lie at residues glutamine 1374–valine 1386 and lysine 1390–lysine 1402. A compositionally biased stretch (basic residues) spans lysine 1389–valine 1399.

This sequence belongs to the PDS5 family. As to quaternary structure, interacts with the cohesin complex. In terms of processing, phosphorylated in mitotic cells.

The protein localises to the nucleus. Functionally, plays a role in androgen-induced proliferative arrest. Required for maintenance of sister chromatid cohesion during mitosis. The polypeptide is Sister chromatid cohesion protein PDS5 homolog B-A (pds5b-a) (Xenopus laevis (African clawed frog)).